The primary structure comprises 968 residues: RNA polymerase-associated protein RapA (968 aa).

A Helicase ATP-binding domain is found at 164–334 (DVGRRHAPRV…FARLRLLDPN (171 aa)). 177–184 (DEVGLGKT) is an ATP binding site. The DEAH box motif lies at 280 to 283 (DEAH). The Helicase C-terminal domain maps to 490–685 (RVEWLMGYLT…ALKAQLEQGR (196 aa)).

This sequence belongs to the SNF2/RAD54 helicase family. RapA subfamily. Interacts with the RNAP. Has a higher affinity for the core RNAP than for the holoenzyme. Its ATPase activity is stimulated by binding to RNAP.

Transcription regulator that activates transcription by stimulating RNA polymerase (RNAP) recycling in case of stress conditions such as supercoiled DNA or high salt concentrations. Probably acts by releasing the RNAP, when it is trapped or immobilized on tightly supercoiled DNA. Does not activate transcription on linear DNA. Probably not involved in DNA repair. In Salmonella paratyphi A (strain ATCC 9150 / SARB42), this protein is RNA polymerase-associated protein RapA.